Consider the following 330-residue polypeptide: 2-methyl-6-phytyl-1,4-hydroquinone methyltransferase 1, chloroplastic (330 aa).

Residues 1–45 (MKEMVSSSTFRAPGGLGFLGPSKIGLIPLRNRSGVRSRVKYIAPK) constitute a chloroplast transit peptide. At 46-295 (CAVSSARPAS…DVEKPVNPFT (250 aa)) the chain is on the chloroplast intermembrane side. An SAM motif I region spans residues 107 to 116 (VVDVGGGTGF). The segment at 152 to 165 (VNIIEGDAEDLPYP) is SAM motif II. The segment at 193 to 206 (RVLKLGGVACLIGP) is SAM motif III. A helical transmembrane segment spans residues 296–316 (FIFRFVMGTICASYYVLVPIY). Over 317 to 330 (MWMKDQIVPKDQPI) the chain is Stromal.

This sequence belongs to the class I-like SAM-binding methyltransferase superfamily. MPBQ/MBSQ MT family.

It localises to the plastid. The protein resides in the chloroplast inner membrane. The catalysed reaction is 2-methyl-6-phytyl-1,4-benzene-1,4-diol + S-adenosyl-L-methionine = 2,3-dimethyl-6-phytylbenzene-1,4-diol + S-adenosyl-L-homocysteine + H(+). The enzyme catalyses 2-methyl-6-(all-trans-nonaprenyl)benzene-1,4-diol + S-adenosyl-L-methionine = plastoquinol-9 + S-adenosyl-L-homocysteine + H(+). It catalyses the reaction 6-geranylgeranyl-2-methylbenzene-1,4-diol + S-adenosyl-L-methionine = 6-geranylgeranyl-2,3-dimethylbenzene-1,4-diol + S-adenosyl-L-homocysteine + H(+). The protein operates within cofactor biosynthesis; tocopherol biosynthesis. In terms of biological role, involved in a key methylation step in both tocopherols (vitamin E) and plastoquinone synthesis. Catalyzes the conversion of 2-methyl-6-phytyl-1,4-hydroquinone (MPBQ) to 2,3-dimethyl-6-phytyl-1,4-hydroquinone (DMPQ, a substrate for tocopherol cyclase), and 2-methyl-6-solanyl-1,4-benzoquinone (MSBQ) to plastoquinone. This Oryza sativa subsp. japonica (Rice) protein is 2-methyl-6-phytyl-1,4-hydroquinone methyltransferase 1, chloroplastic (ARSM2).